Consider the following 568-residue polypeptide: Urease subunit alpha (568 aa).

Residues 130–568 form the Urease domain; that stretch reads GGIDTHIHFI…LPMAQRYFLF (439 aa). The Ni(2+) site is built by His-135, His-137, and Lys-218. Position 218 is an N6-carboxylysine (Lys-218). His-220 contributes to the substrate binding site. Ni(2+) contacts are provided by His-247 and His-273. His-321 serves as the catalytic Proton donor. Asp-361 serves as a coordination point for Ni(2+).

It belongs to the metallo-dependent hydrolases superfamily. Urease alpha subunit family. Heterotrimer of UreA (gamma), UreB (beta) and UreC (alpha) subunits. Three heterotrimers associate to form the active enzyme. Ni cation serves as cofactor. In terms of processing, carboxylation allows a single lysine to coordinate two nickel ions.

The protein localises to the cytoplasm. The catalysed reaction is urea + 2 H2O + H(+) = hydrogencarbonate + 2 NH4(+). It functions in the pathway nitrogen metabolism; urea degradation; CO(2) and NH(3) from urea (urease route): step 1/1. In Burkholderia multivorans (strain ATCC 17616 / 249), this protein is Urease subunit alpha.